Reading from the N-terminus, the 376-residue chain is Histidinol-phosphate aminotransferase 1 (376 aa).

The residue at position 235 (lysine 235) is an N6-(pyridoxal phosphate)lysine.

The protein belongs to the class-II pyridoxal-phosphate-dependent aminotransferase family. Histidinol-phosphate aminotransferase subfamily. In terms of assembly, homodimer. It depends on pyridoxal 5'-phosphate as a cofactor.

The catalysed reaction is L-histidinol phosphate + 2-oxoglutarate = 3-(imidazol-4-yl)-2-oxopropyl phosphate + L-glutamate. It functions in the pathway amino-acid biosynthesis; L-histidine biosynthesis; L-histidine from 5-phospho-alpha-D-ribose 1-diphosphate: step 7/9. This chain is Histidinol-phosphate aminotransferase 1, found in Cupriavidus pinatubonensis (strain JMP 134 / LMG 1197) (Cupriavidus necator (strain JMP 134)).